The sequence spans 148 residues: Large ribosomal subunit protein uL15 (148 aa).

Residues 1-30 (MPSRLRKTRKLRGHVSHGHGRIGKHRKHPG) show a composition bias toward basic residues. The interval 1-38 (MPSRLRKTRKLRGHVSHGHGRIGKHRKHPGGRGNAGGL) is disordered. The residue at position 39 (His39) is a (3S)-3-hydroxyhistidine. 2 positions are modified to N6-acetyllysine: Lys47 and Lys55. Ser68 is modified (phosphoserine). Lys110 carries the post-translational modification N6-acetyllysine.

It belongs to the universal ribosomal protein uL15 family. Post-translationally, hydroxylated on His-39 by MINA.

In Pan troglodytes (Chimpanzee), this protein is Large ribosomal subunit protein uL15 (RPL27A).